The chain runs to 194 residues: MHKIVLASSSPYRRALLEKLRIPFEFHAPDIDETPHAGEEAAPMVQRLAIAKAQALAERYPRHLIIGADQCCVLDGQIAGKPLTEANAIAQLTSAHGKAVTFYTGLALLNSASGALQACTEPFVVRFRALEDAEIAGYVHLEQPLQCAGSFQCEGLGIALFEALEGRDPNTLIGLPLLALADMLRREGVNPLRR.

Asp69 serves as the catalytic Proton acceptor.

This sequence belongs to the Maf family. YceF subfamily. A divalent metal cation is required as a cofactor.

It is found in the cytoplasm. It catalyses the reaction N(7)-methyl-GTP + H2O = N(7)-methyl-GMP + diphosphate + H(+). Functionally, nucleoside triphosphate pyrophosphatase that hydrolyzes 7-methyl-GTP (m(7)GTP). May have a dual role in cell division arrest and in preventing the incorporation of modified nucleotides into cellular nucleic acids. The protein is 7-methyl-GTP pyrophosphatase of Sodalis glossinidius (strain morsitans).